A 234-amino-acid chain; its full sequence is Probable pectate lyase F (234 aa).

An N-terminal signal peptide occupies residues 1–17; that stretch reads MRSTAAVLSILLPGALA. Asn-168 is a glycosylation site (N-linked (GlcNAc...) asparagine).

It belongs to the polysaccharide lyase 3 family. The cofactor is Ca(2+).

It is found in the secreted. It carries out the reaction Eliminative cleavage of (1-&gt;4)-alpha-D-galacturonan to give oligosaccharides with 4-deoxy-alpha-D-galact-4-enuronosyl groups at their non-reducing ends.. In terms of biological role, pectinolytic enzyme consist of four classes of enzymes: pectin lyase, polygalacturonase, pectin methylesterase and rhamnogalacturonase. Among pectinolytic enzymes, pectin lyase is the most important in depolymerization of pectin, since it cleaves internal glycosidic bonds of highly methylated pectins. Favors pectate, the anion, over pectin, the methyl ester. This Aspergillus terreus (strain NIH 2624 / FGSC A1156) protein is Probable pectate lyase F (plyF).